The chain runs to 336 residues: NADH-quinone oxidoreductase subunit H (336 aa).

The next 8 helical transmembrane spans lie at 9–29 (LVWI…LTYA), 77–97 (FLFA…VIPF), 116–136 (LGVM…IIAG), 156–176 (ISYE…TGSL), 188–208 (LPYW…VSIL), 236–256 (IPFA…SSIM), 275–295 (IVPG…CFLI), and 315–335 (VFLP…AFNI).

This sequence belongs to the complex I subunit 1 family. As to quaternary structure, NDH-1 is composed of 14 different subunits. Subunits NuoA, H, J, K, L, M, N constitute the membrane sector of the complex.

It is found in the cell inner membrane. The catalysed reaction is a quinone + NADH + 5 H(+)(in) = a quinol + NAD(+) + 4 H(+)(out). In terms of biological role, NDH-1 shuttles electrons from NADH, via FMN and iron-sulfur (Fe-S) centers, to quinones in the respiratory chain. The immediate electron acceptor for the enzyme in this species is believed to be ubiquinone. Couples the redox reaction to proton translocation (for every two electrons transferred, four hydrogen ions are translocated across the cytoplasmic membrane), and thus conserves the redox energy in a proton gradient. This subunit may bind ubiquinone. This is NADH-quinone oxidoreductase subunit H from Neorickettsia sennetsu (strain ATCC VR-367 / Miyayama) (Ehrlichia sennetsu).